A 618-amino-acid chain; its full sequence is Methylmalonyl-CoA mutase small subunit (618 aa).

The protein belongs to the methylmalonyl-CoA mutase family. In terms of assembly, heterodimer of an alpha and a beta chain. Requires adenosylcob(III)alamin as cofactor.

The catalysed reaction is (R)-methylmalonyl-CoA = succinyl-CoA. The protein operates within metabolic intermediate metabolism; propanoyl-CoA degradation; succinyl-CoA from propanoyl-CoA: step 3/3. Functionally, catalyzes the isomerization of succinyl-CoA to methylmalonyl-CoA during synthesis of propionate from tricarboxylic acid-cycle intermediates. This is Methylmalonyl-CoA mutase small subunit (mutA) from Porphyromonas gingivalis (strain ATCC BAA-308 / W83).